Here is a 118-residue protein sequence, read N- to C-terminus: cAMP-responsive element-binding protein-like 2 (118 aa).

The segment at 1 to 25 (MDDSKVSGGKVKKPGKRGRKPAKID) is disordered. Over residues 10-21 (KVKKPGKRGRKP) the composition is skewed to basic residues. The bZIP domain occupies 23 to 86 (KIDLKAKLER…AAMDQGKIPS (64 aa)). A basic motif region spans residues 29–60 (KLERSRQSARECRARKKLRYQYLEELVSSRER). Residues 62 to 69 (ICALREEL) form a leucine-zipper region.

It belongs to the bZIP family. ATF subfamily.

The protein localises to the nucleus. Functionally, probable regulator of creb1 transcriptional activity which is involved in adipose cells differentiation. May also play a regulatory role in the cell cycle. This Xenopus tropicalis (Western clawed frog) protein is cAMP-responsive element-binding protein-like 2 (crebl2).